Reading from the N-terminus, the 169-residue chain is Cell division inhibitor SulA (169 aa).

Residues 106–112 (ALRTGNY) form a ftsZ binding region. The segment at 162–169 (KIHSNLYH) is lon protease binding.

Belongs to the SulA family. In terms of assembly, interacts with FtsZ. Is rapidly cleaved and degraded by the Lon protease once DNA damage is repaired.

In terms of biological role, component of the SOS system and an inhibitor of cell division. Accumulation of SulA causes rapid cessation of cell division and the appearance of long, non-septate filaments. In the presence of GTP, binds a polymerization-competent form of FtsZ in a 1:1 ratio, thus inhibiting FtsZ polymerization and therefore preventing it from participating in the assembly of the Z ring. This mechanism prevents the premature segregation of damaged DNA to daughter cells during cell division. In Shigella flexneri serotype 5b (strain 8401), this protein is Cell division inhibitor SulA.